The chain runs to 4367 residues: Dynein heavy chain, cytoplasmic (4367 aa).

Residues 1–13 (MMDSVPSPPPQPS) are compositionally biased toward pro residues. The interval 1-20 (MMDSVPSPPPQPSPDANGVA) is disordered. Positions 1–1904 (MMDSVPSPPP…HIKMANAKLN (1904 aa)) are stem. Coiled coils occupy residues 676 to 693 (ARQI…VEQV), 1176 to 1215 (IKFA…EAVR), 1327 to 1351 (LTHF…KEAL), 1557 to 1574 (YKEF…LNRV), and 1637 to 1668 (NIPN…KERV). 4 AAA regions span residues 1905–2130 (YGFE…VLVS), 2202–2460 (EAIR…FTVA), 2566–2815 (EVNT…WVRG), and 2909–3179 (TFCE…QGKI). 1943–1950 (GPAGTGKT) contributes to the ATP binding site. A coiled-coil region spans residues 2195–2218 (ASLEKLQEAIRRLAAERQLVVNDI). Residues 2240-2247 (GNSGSGKS), 2605-2612 (GPPGSGKT), and 2947-2954 (GVSGSGKT) contribute to the ATP site. Coiled coils occupy residues 3193–3296 (QYVK…LARA), 3423–3481 (PLRE…SRVQ), and 3778–3809 (VIET…VEQI). Positions 3193–3481 (QYVKLYNEKR…AIKAEMSRVQ (289 aa)) are stalk. 2 AAA regions span residues 3565–3794 (LSTA…EISA) and 4003–4215 (AERF…VIDT).

Belongs to the dynein heavy chain family. In terms of assembly, consists of at least two heavy chains and a number of intermediate and light chains.

It is found in the cytoplasm. It localises to the cytoskeleton. Cytoplasmic dynein acts as a motor for the intracellular retrograde motility of vesicles and organelles along microtubules. Dynein has ATPase activity; the force-producing power stroke is thought to occur on release of ADP. Required to maintain uniform nuclear distribution in hyphae. This is Dynein heavy chain, cytoplasmic (ro-1) from Neurospora crassa (strain ATCC 24698 / 74-OR23-1A / CBS 708.71 / DSM 1257 / FGSC 987).